We begin with the raw amino-acid sequence, 326 residues long: Probable protein phosphatase 2C 61 (326 aa).

Residues 42–316 (LGSVSSLAGG…DDISVVCLSL (275 aa)) enclose the PPM-type phosphatase domain. The Mn(2+) site is built by aspartate 77, glycine 78, aspartate 261, and aspartate 307.

Belongs to the PP2C family. The cofactor is Mg(2+). Requires Mn(2+) as cofactor.

The enzyme catalyses O-phospho-L-seryl-[protein] + H2O = L-seryl-[protein] + phosphate. The catalysed reaction is O-phospho-L-threonyl-[protein] + H2O = L-threonyl-[protein] + phosphate. The sequence is that of Probable protein phosphatase 2C 61 from Arabidopsis thaliana (Mouse-ear cress).